A 409-amino-acid chain; its full sequence is Argininosuccinate synthase (409 aa).

ATP-binding positions include 8–16 and Ala34; that span reads AYSGGLDTS. Position 85 (Tyr85) interacts with L-citrulline. An ATP-binding site is contributed by Gly115. 3 residues coordinate L-aspartate: Thr117, Asn121, and Asp122. Asn121 is a binding site for L-citrulline. L-citrulline-binding residues include Arg125, Ser178, Ser187, Glu268, and Tyr280.

The protein belongs to the argininosuccinate synthase family. Type 1 subfamily. In terms of assembly, homotetramer.

The protein resides in the cytoplasm. It carries out the reaction L-citrulline + L-aspartate + ATP = 2-(N(omega)-L-arginino)succinate + AMP + diphosphate + H(+). Its pathway is amino-acid biosynthesis; L-arginine biosynthesis; L-arginine from L-ornithine and carbamoyl phosphate: step 2/3. The sequence is that of Argininosuccinate synthase from Thermotoga sp. (strain RQ2).